Here is a 309-residue protein sequence, read N- to C-terminus: Porphobilinogen deaminase (309 aa).

Cys-241 is modified (S-(dipyrrolylmethanemethyl)cysteine).

The protein belongs to the HMBS family. As to quaternary structure, monomer. Requires dipyrromethane as cofactor.

It carries out the reaction 4 porphobilinogen + H2O = hydroxymethylbilane + 4 NH4(+). It participates in porphyrin-containing compound metabolism; protoporphyrin-IX biosynthesis; coproporphyrinogen-III from 5-aminolevulinate: step 2/4. Tetrapolymerization of the monopyrrole PBG into the hydroxymethylbilane pre-uroporphyrinogen in several discrete steps. The protein is Porphobilinogen deaminase of Bacillus cereus (strain ATCC 10987 / NRS 248).